The following is a 110-amino-acid chain: Iron-sulfur cluster assembly protein CyaY (110 aa).

This sequence belongs to the frataxin family.

In terms of biological role, involved in iron-sulfur (Fe-S) cluster assembly. May act as a regulator of Fe-S biogenesis. The sequence is that of Iron-sulfur cluster assembly protein CyaY from Pseudomonas fluorescens (strain ATCC BAA-477 / NRRL B-23932 / Pf-5).